The following is a 423-amino-acid chain: Transcription factor IIIB 50 kDa subunit (423 aa).

The TFIIB-type zinc finger occupies 1–34 (MSKNCPECGSSRVVEDDLYSQKQWVCEDCGSVVS). Zn(2+) contacts are provided by C5, C8, C26, and C29. Copy 2 of the repeat occupies 171–245 (LESFCYDFKL…LARMKYSLMK (75 aa)). Positions 325–340 (QTSQYSESELSDSKSS) are enriched in low complexity. The disordered stretch occupies residues 325 to 358 (QTSQYSESELSDSKSSVQTQCKSPPDEEDEGCEL). The residue at position 373 (C373) is a Cysteine sulfenic acid (-SOH).

This sequence belongs to the TFIIB family. As to quaternary structure, component of TFIIIB complexes. Interacts with TBP and forms a ternary complex with TBp and target DNA sequences. Post-translationally, in response to oxidative stress, a Cys-residue is reversibly oxidized to cysteine sulfenic acid. This impairs formation of a ternary complex with TBP and DNA and down-regulates expression of target genes in response to oxidative stress.

Its subcellular location is the nucleus. Functionally, general activator of RNA polymerase III transcription. Factor exclusively required for RNA polymerase III transcription of genes with promoter elements upstream of the initiation sites. Contributes to the regulation of gene expression; functions as activator in the absence of oxidative stress. Down-regulates expression of target genes in response to oxidative stress. Overexpression protects cells against apoptosis in response to oxidative stress. The protein is Transcription factor IIIB 50 kDa subunit (brf2) of Danio rerio (Zebrafish).